Here is a 507-residue protein sequence, read N- to C-terminus: ATP synthase subunit alpha, chloroplastic (507 aa).

170–177 provides a ligand contact to ATP; it reads GDRQTGKT.

It belongs to the ATPase alpha/beta chains family. In terms of assembly, F-type ATPases have 2 components, CF(1) - the catalytic core - and CF(0) - the membrane proton channel. CF(1) has five subunits: alpha(3), beta(3), gamma(1), delta(1), epsilon(1). CF(0) has four main subunits: a, b, b' and c.

The protein localises to the plastid. The protein resides in the chloroplast thylakoid membrane. The enzyme catalyses ATP + H2O + 4 H(+)(in) = ADP + phosphate + 5 H(+)(out). Its function is as follows. Produces ATP from ADP in the presence of a proton gradient across the membrane. The alpha chain is a regulatory subunit. The sequence is that of ATP synthase subunit alpha, chloroplastic from Spinacia oleracea (Spinach).